The sequence spans 243 residues: Lectin-4 (243 aa).

Q1 carries the post-translational modification Pyrrolidone carboxylic acid. The N-linked (GlcNAc...) asparagine; in alpha chain glycan is linked to N5. N-linked (GlcNAc...) asparagine glycosylation occurs at N18. Mn(2+) is bound by residues E129 and D131. Residues D131, W133, N135, and D140 each contribute to the Ca(2+) site. Mn(2+)-binding residues include D140 and H145.

The protein belongs to the leguminous lectin family. Homodimer of Alpha and Beta forms. In terms of processing, N-glycosylation of Asn-5 converts form Beta to form Alpha.

Functionally, lectin which has a strong affinity for both the Lewis b and y human blood-group determinants. The chain is Lectin-4 from Griffonia simplicifolia (Bandeiraea simplicifolia).